The primary structure comprises 376 residues: Cytoplasmic tRNA 2-thiolation protein 2 (376 aa).

The protein belongs to the CTU2/NCS2 family.

The protein resides in the cytoplasm. It functions in the pathway tRNA modification; 5-methoxycarbonylmethyl-2-thiouridine-tRNA biosynthesis. In terms of biological role, plays a central role in 2-thiolation of mcm(5)S(2)U at tRNA wobble positions of tRNA(Lys), tRNA(Glu) and tRNA(Gln). May act by forming a heterodimer with NCS6 that ligates sulfur from thiocarboxylated URM1 onto the uridine of tRNAs at wobble position. Prior mcm(5) tRNA modification by the elongator complex is required for 2-thiolation. May also be involved in protein urmylation. This Coccidioides immitis (strain RS) (Valley fever fungus) protein is Cytoplasmic tRNA 2-thiolation protein 2.